We begin with the raw amino-acid sequence, 218 residues long: Glycerol-3-phosphate acyltransferase (218 aa).

Helical transmembrane passes span 10 to 30 (LTLG…FGLI), 60 to 80 (DLAA…VLLA), 88 to 108 (PAII…PVWL), 125 to 145 (SAAW…AFLF), and 165 to 185 (AFDQ…LIFI).

It belongs to the PlsY family. In terms of assembly, probably interacts with PlsX.

Its subcellular location is the cell inner membrane. It catalyses the reaction an acyl phosphate + sn-glycerol 3-phosphate = a 1-acyl-sn-glycero-3-phosphate + phosphate. It functions in the pathway lipid metabolism; phospholipid metabolism. Functionally, catalyzes the transfer of an acyl group from acyl-phosphate (acyl-PO(4)) to glycerol-3-phosphate (G3P) to form lysophosphatidic acid (LPA). This enzyme utilizes acyl-phosphate as fatty acyl donor, but not acyl-CoA or acyl-ACP. The sequence is that of Glycerol-3-phosphate acyltransferase from Caulobacter vibrioides (strain ATCC 19089 / CIP 103742 / CB 15) (Caulobacter crescentus).